We begin with the raw amino-acid sequence, 145 residues long: Peptide methionine sulfoxide reductase MsrB (145 aa).

Residues 6–129 enclose the MsrB domain; it reads KNERLKQLTD…NSAALRFIPV (124 aa). Cys-118 (nucleophile) is an active-site residue.

This sequence belongs to the MsrB Met sulfoxide reductase family.

The enzyme catalyses L-methionyl-[protein] + [thioredoxin]-disulfide + H2O = L-methionyl-(R)-S-oxide-[protein] + [thioredoxin]-dithiol. The protein is Peptide methionine sulfoxide reductase MsrB of Listeria innocua serovar 6a (strain ATCC BAA-680 / CLIP 11262).